A 273-amino-acid chain; its full sequence is HMP-PP phosphatase (273 aa).

The active-site Nucleophile is the Asp8. Residues Asp8, Asp10, and Asp212 each contribute to the Mg(2+) site.

The protein belongs to the HAD-like hydrolase superfamily. Cof family. The cofactor is Mg(2+).

It catalyses the reaction 4-amino-2-methyl-5-(diphosphooxymethyl)pyrimidine + H2O = 4-amino-2-methyl-5-(phosphooxymethyl)pyrimidine + phosphate + H(+). Catalyzes the hydrolysis of 4-amino-2-methyl-5-hydroxymethylpyrimidine pyrophosphate (HMP-PP) to 4-amino-2-methyl-5-hydroxymethylpyrimidine phosphate (HMP-P). This chain is HMP-PP phosphatase, found in Yersinia pestis bv. Antiqua (strain Antiqua).